Here is a 342-residue protein sequence, read N- to C-terminus: Probable alcohol acetyltransferase (342 aa).

The transit peptide at 1–38 directs the protein to the mitochondrion; it reads MMILGKAGILAQYGTIYVRQNTIRNNLSSCIFKQSLCA. Residues 39–46 constitute a propeptide, removed in mature form; it reads FHSLAKVL. In terms of domain architecture, AB hydrolase-1 spans 75-326; that stretch reads PPIIILHGLF…AGHWVNAEKP (252 aa). Catalysis depends on charge relay system residues serine 152 and histidine 319.

It belongs to the AB hydrolase superfamily. In terms of processing, processed by both the mitochondrial processing peptidase (MPP) and the mitochondrial octapeptidyl aminopeptidase (OCT1).

The protein resides in the mitochondrion. In terms of biological role, probable alcohol acetyltransferase that uses acetyl-CoA to synthesize acetate esters from various alcohols. Not involved in the synthesis of ethyl acetate. This chain is Probable alcohol acetyltransferase (IMO32), found in Saccharomyces cerevisiae (strain ATCC 204508 / S288c) (Baker's yeast).